Consider the following 201-residue polypeptide: uncharacterized protein (201 aa).

In terms of assembly, interacts with the chaperones HSP82 and HSC82.

This is an uncharacterized protein from Saccharomyces cerevisiae (strain ATCC 204508 / S288c) (Baker's yeast).